The chain runs to 561 residues: Potassium-transporting ATPase potassium-binding subunit (561 aa).

10 helical membrane-spanning segments follow: residues 4–24 (IVMQDAFFVVLLLVLAVPLGI), 65–85 (AVSVLAFSAVGFVFVMAVLML), 133–153 (IGLTVQNFVSAATGIAVLFAV), 177–197 (LYILLPLSLILALLLVSQGVV), 253–273 (FTNLIEMLAILLIPVALVVMF), 285–305 (AIMTAMMIVFVIGVVAITISE), 380–400 (GLYGMIGFIILTVFIAGLLVG), 417–437 (MVCLLILVPPLLTLFGTAVAV), 484–504 (MVGAVMMLLARFIPLVAALYL), and 528–548 (FIGLLIGVVVLVGALSFLPAL).

It belongs to the KdpA family. As to quaternary structure, the system is composed of three essential subunits: KdpA, KdpB and KdpC.

It is found in the cell membrane. Part of the high-affinity ATP-driven potassium transport (or Kdp) system, which catalyzes the hydrolysis of ATP coupled with the electrogenic transport of potassium into the cytoplasm. This subunit binds the extracellular potassium ions and delivers the ions to the membrane domain of KdpB through an intramembrane tunnel. In Listeria monocytogenes serotype 4b (strain CLIP80459), this protein is Potassium-transporting ATPase potassium-binding subunit.